A 251-amino-acid chain; its full sequence is Prolactin-7B1 (251 aa).

An N-terminal signal peptide occupies residues 1-29 (MHLSLTQQCLWPLQILLVSNLLLWENVAA). Asn-73 is a glycosylation site (N-linked (GlcNAc...) asparagine). Intrachain disulfides connect Cys-100/Cys-216 and Cys-233/Cys-241.

This sequence belongs to the somatotropin/prolactin family.

It localises to the secreted. This chain is Prolactin-7B1 (Prl7b1), found in Rattus norvegicus (Rat).